The following is a 138-amino-acid chain: Gonadotropin subunit beta-2 (138 aa).

A signal peptide spans 1 to 21 (MPASSYFLLFFFMNFFSPAQS). Intrachain disulfides connect C27–C75, C41–C90, C44–C128, C52–C106, C56–C108, and C111–C118. N31 carries N-linked (GlcNAc...) asparagine glycosylation.

Belongs to the glycoprotein hormones subunit beta family. In terms of assembly, heterodimer of an alpha and a beta chain.

The protein resides in the secreted. Its function is as follows. Involved in gametogenesis and steroidogenesis. This is Gonadotropin subunit beta-2 (cgbb) from Clarias gariepinus (North African catfish).